Reading from the N-terminus, the 253-residue chain is MDWHFQGTNDDREHTKRIIIEYLNRIKAGDDSAREEFILRFRPFILKLVYKATDRHVEPENSEEYSVALLAFNEAINAYDEEKHSNFLVFSEQVINRRLIDYKRKNHKNKMVYPFSYFENEDIKLERTLSDADGNNAIERLEFTDEIRLFKSELASFDITFKDLLSCTPKHRDSRELLINIAKKIASNDGLYEKLKKTKKLPTLELLKLAKVSRRTIERNKKYIIAVSLILRSNLEIFKEYAAGIQEKEVDLR.

The Polymerase core binding motif lies at 63 to 76 (EEYSVALLAFNEAI). A DNA-binding region (H-T-H motif) is located at residues 203-222 (TLELLKLAKVSRRTIERNKK).

The protein belongs to the sigma-70 factor family. SigI subfamily. As to quaternary structure, interacts with RsgI6.

The protein resides in the cytoplasm. Negatively regulated by the anti-sigma-I factor RsgI6. Binding of the polysaccharide substrate to RsgI6 may lead to the release and activation of SigI6. Sigma factors are initiation factors that promote the attachment of RNA polymerase to specific initiation sites and are then released. This sigma factor is involved in regulation of cellulosomal genes via an external polysaccharide-sensing mechanism. Recognizes the predicted promoters associated with sigI6 itself, xyn11B, xyn10D, xyn10Z, xyn10Y, cel9V, cseP, sigI1, cipA, and rsgI5. The protein is RNA polymerase sigma factor SigI6 of Acetivibrio thermocellus (strain ATCC 27405 / DSM 1237 / JCM 9322 / NBRC 103400 / NCIMB 10682 / NRRL B-4536 / VPI 7372) (Clostridium thermocellum).